A 616-amino-acid chain; its full sequence is Elongation factor 4 (616 aa).

In terms of domain architecture, tr-type G spans 14 to 195; that stretch reads SRIRNFCIIA…EVIRQVPPPV (182 aa). Residues 26–31 and 142–145 each bind GTP; these read DHGKST and NKID.

It belongs to the TRAFAC class translation factor GTPase superfamily. Classic translation factor GTPase family. LepA subfamily.

Its subcellular location is the cell membrane. It carries out the reaction GTP + H2O = GDP + phosphate + H(+). Its function is as follows. Required for accurate and efficient protein synthesis under certain stress conditions. May act as a fidelity factor of the translation reaction, by catalyzing a one-codon backward translocation of tRNAs on improperly translocated ribosomes. Back-translocation proceeds from a post-translocation (POST) complex to a pre-translocation (PRE) complex, thus giving elongation factor G a second chance to translocate the tRNAs correctly. Binds to ribosomes in a GTP-dependent manner. This chain is Elongation factor 4, found in Nocardia farcinica (strain IFM 10152).